We begin with the raw amino-acid sequence, 523 residues long: 2-isopropylmalate synthase (523 aa).

The 263-residue stretch at 5-267 folds into the Pyruvate carboxyltransferase domain; sequence VIIFDTTLRD…ETGINAKEIH (263 aa). D14, H202, H204, and N238 together coordinate Mn(2+). The regulatory domain stretch occupies residues 392 to 523; that stretch reads KLQQLVVHSD…QQNKRELGGV (132 aa).

The protein belongs to the alpha-IPM synthase/homocitrate synthase family. LeuA type 1 subfamily. In terms of assembly, homodimer. Mn(2+) serves as cofactor.

The protein resides in the cytoplasm. The enzyme catalyses 3-methyl-2-oxobutanoate + acetyl-CoA + H2O = (2S)-2-isopropylmalate + CoA + H(+). Its pathway is amino-acid biosynthesis; L-leucine biosynthesis; L-leucine from 3-methyl-2-oxobutanoate: step 1/4. Its function is as follows. Catalyzes the condensation of the acetyl group of acetyl-CoA with 3-methyl-2-oxobutanoate (2-ketoisovalerate) to form 3-carboxy-3-hydroxy-4-methylpentanoate (2-isopropylmalate). The chain is 2-isopropylmalate synthase from Shewanella pealeana (strain ATCC 700345 / ANG-SQ1).